A 261-amino-acid polypeptide reads, in one-letter code: Proteasome subunit alpha type-4 (261 aa).

Ser-13 and Ser-75 each carry phosphoserine. At Lys-127 the chain carries N6-acetyllysine. The residue at position 173 (Ser-173) is a Phosphoserine. Residue Lys-176 is modified to N6-acetyllysine. The segment at 240–261 is disordered; sequence HEEEEAKAEREKKEKEQREKDK.

The protein belongs to the peptidase T1A family. As to quaternary structure, the 26S proteasome consists of a 20S proteasome core and two 19S regulatory subunits. The 20S proteasome core is a barrel-shaped complex made of 28 subunits that are arranged in four stacked rings. The two outer rings are each formed by seven alpha subunits, and the two inner rings are formed by seven beta subunits. The proteolytic activity is exerted by three beta-subunits PSMB5, PSMB6 and PSMB7. In terms of tissue distribution, ubiquitous.

Its subcellular location is the cytoplasm. It localises to the nucleus. Its function is as follows. Component of the 20S core proteasome complex involved in the proteolytic degradation of most intracellular proteins. This complex plays numerous essential roles within the cell by associating with different regulatory particles. Associated with two 19S regulatory particles, forms the 26S proteasome and thus participates in the ATP-dependent degradation of ubiquitinated proteins. The 26S proteasome plays a key role in the maintenance of protein homeostasis by removing misfolded or damaged proteins that could impair cellular functions, and by removing proteins whose functions are no longer required. Associated with the PA200 or PA28, the 20S proteasome mediates ubiquitin-independent protein degradation. This type of proteolysis is required in several pathways including spermatogenesis (20S-PA200 complex) or generation of a subset of MHC class I-presented antigenic peptides (20S-PA28 complex). In Rattus norvegicus (Rat), this protein is Proteasome subunit alpha type-4 (Psma4).